We begin with the raw amino-acid sequence, 283 residues long: Pantothenate synthetase (283 aa).

34 to 41 (MGALHDGH) lines the ATP pocket. Residue histidine 41 is the Proton donor of the active site. (R)-pantoate is bound at residue glutamine 65. A beta-alanine-binding site is contributed by glutamine 65. 152–155 (GEKD) is a binding site for ATP. Glutamine 158 is a (R)-pantoate binding site. Residues valine 181 and 189 to 192 (MSSR) each bind ATP.

The protein belongs to the pantothenate synthetase family. In terms of assembly, homodimer.

It is found in the cytoplasm. It carries out the reaction (R)-pantoate + beta-alanine + ATP = (R)-pantothenate + AMP + diphosphate + H(+). The protein operates within cofactor biosynthesis; (R)-pantothenate biosynthesis; (R)-pantothenate from (R)-pantoate and beta-alanine: step 1/1. Catalyzes the condensation of pantoate with beta-alanine in an ATP-dependent reaction via a pantoyl-adenylate intermediate. The protein is Pantothenate synthetase of Bradyrhizobium sp. (strain BTAi1 / ATCC BAA-1182).